The following is a 320-amino-acid chain: E3 ubiquitin-protein ligase RZF1 (320 aa).

An N-acetylserine modification is found at Ser-2. An RING-type; atypical zinc finger spans residues Cys-186 to Arg-227. Residues Glu-229–Tyr-320 are disordered. Low complexity-rich tracts occupy residues Ser-232–Gly-249 and Gln-295–Gln-308.

As to expression, expressed in seedlings and in flowers.

It carries out the reaction S-ubiquitinyl-[E2 ubiquitin-conjugating enzyme]-L-cysteine + [acceptor protein]-L-lysine = [E2 ubiquitin-conjugating enzyme]-L-cysteine + N(6)-ubiquitinyl-[acceptor protein]-L-lysine.. Functionally, E3 ubiquitin-protein ligase that promotes osmotic stress and abscisic acid (ABA) responses. Negatively regulates drought-mediated control of early seedling development, probably by influencing proline content, water loss, membrane ion leakage and the expression of dehydration stress-related genes (e.g. RAB18, RD29A, RD29B, AOX1A, ERD15, ERD1, COR15A, P5CS1 and P5CR). Modulates bZIP11 accumulation during rehydration following drought. This Arabidopsis thaliana (Mouse-ear cress) protein is E3 ubiquitin-protein ligase RZF1.